The chain runs to 447 residues: Phosphoglucosamine mutase (447 aa).

Ser100 serves as the catalytic Phosphoserine intermediate. Residues Ser100, Asp240, Asp242, and Asp244 each coordinate Mg(2+). Ser100 bears the Phosphoserine mark.

The protein belongs to the phosphohexose mutase family. Mg(2+) is required as a cofactor. Post-translationally, activated by phosphorylation.

The catalysed reaction is alpha-D-glucosamine 1-phosphate = D-glucosamine 6-phosphate. Functionally, catalyzes the conversion of glucosamine-6-phosphate to glucosamine-1-phosphate. The chain is Phosphoglucosamine mutase from Clostridium botulinum (strain Eklund 17B / Type B).